The following is a 379-amino-acid chain: tRNA 2-selenouridine synthase (379 aa).

The Rhodanese domain maps to 15-138 (FQQNIPLMDV…ARNYLIKQIE (124 aa)). Cysteine 98 (S-selanylcysteine intermediate) is an active-site residue.

This sequence belongs to the SelU family. As to quaternary structure, monomer.

The enzyme catalyses 5-methylaminomethyl-2-thiouridine(34) in tRNA + selenophosphate + (2E)-geranyl diphosphate + H2O + H(+) = 5-methylaminomethyl-2-selenouridine(34) in tRNA + (2E)-thiogeraniol + phosphate + diphosphate. It carries out the reaction 5-methylaminomethyl-2-thiouridine(34) in tRNA + (2E)-geranyl diphosphate = 5-methylaminomethyl-S-(2E)-geranyl-thiouridine(34) in tRNA + diphosphate. It catalyses the reaction 5-methylaminomethyl-S-(2E)-geranyl-thiouridine(34) in tRNA + selenophosphate + H(+) = 5-methylaminomethyl-2-(Se-phospho)selenouridine(34) in tRNA + (2E)-thiogeraniol. The catalysed reaction is 5-methylaminomethyl-2-(Se-phospho)selenouridine(34) in tRNA + H2O = 5-methylaminomethyl-2-selenouridine(34) in tRNA + phosphate. In terms of biological role, involved in the post-transcriptional modification of the uridine at the wobble position (U34) of tRNA(Lys), tRNA(Glu) and tRNA(Gln). Catalyzes the conversion of 2-thiouridine (S2U-RNA) to 2-selenouridine (Se2U-RNA). Acts in a two-step process involving geranylation of 2-thiouridine (S2U) to S-geranyl-2-thiouridine (geS2U) and subsequent selenation of the latter derivative to 2-selenouridine (Se2U) in the tRNA chain. This chain is tRNA 2-selenouridine synthase, found in Bdellovibrio bacteriovorus (strain ATCC 15356 / DSM 50701 / NCIMB 9529 / HD100).